Reading from the N-terminus, the 213-residue chain is Methylthioribulose-1-phosphate dehydratase (213 aa).

The Zn(2+) site is built by H104 and H106.

The protein belongs to the aldolase class II family. MtnB subfamily. The cofactor is Zn(2+).

It carries out the reaction 5-(methylsulfanyl)-D-ribulose 1-phosphate = 5-methylsulfanyl-2,3-dioxopentyl phosphate + H2O. Its pathway is amino-acid biosynthesis; L-methionine biosynthesis via salvage pathway; L-methionine from S-methyl-5-thio-alpha-D-ribose 1-phosphate: step 2/6. Catalyzes the dehydration of methylthioribulose-1-phosphate (MTRu-1-P) into 2,3-diketo-5-methylthiopentyl-1-phosphate (DK-MTP-1-P). In Stenotrophomonas maltophilia (strain K279a), this protein is Methylthioribulose-1-phosphate dehydratase.